Reading from the N-terminus, the 187-residue chain is Protein GrpE (187 aa).

Positions 1–26 are disordered; sequence MNDLKNAENGPDEADTPQGAPSQEPD.

The protein belongs to the GrpE family. Homodimer.

The protein resides in the cytoplasm. Its function is as follows. Participates actively in the response to hyperosmotic and heat shock by preventing the aggregation of stress-denatured proteins, in association with DnaK and GrpE. It is the nucleotide exchange factor for DnaK and may function as a thermosensor. Unfolded proteins bind initially to DnaJ; upon interaction with the DnaJ-bound protein, DnaK hydrolyzes its bound ATP, resulting in the formation of a stable complex. GrpE releases ADP from DnaK; ATP binding to DnaK triggers the release of the substrate protein, thus completing the reaction cycle. Several rounds of ATP-dependent interactions between DnaJ, DnaK and GrpE are required for fully efficient folding. The polypeptide is Protein GrpE (Methylocella silvestris (strain DSM 15510 / CIP 108128 / LMG 27833 / NCIMB 13906 / BL2)).